Here is a 472-residue protein sequence, read N- to C-terminus: Protein c-ets-2-B (472 aa).

A PNT domain is found at 85-170; it reads DTFNGFAKER…EHLEEMMKEY (86 aa). The segment at residues 366–446 is a DNA-binding region (ETS); sequence IQLWQFLLEL…SGKRYVYRFV (81 aa).

Belongs to the ETS family.

The protein localises to the nucleus. Functionally, probable transcription factor. This Xenopus laevis (African clawed frog) protein is Protein c-ets-2-B (ets2-b).